The following is a 425-amino-acid chain: Adenylosuccinate synthetase (425 aa).

Residues 12-18 and 40-42 contribute to the GTP site; these read GDEGKGK and GHT. Residue Asp13 is the Proton acceptor of the active site. The Mg(2+) site is built by Asp13 and Gly40. IMP is bound by residues 13 to 16, 38 to 41, Thr130, Arg144, Gln225, Thr240, and Arg304; these read DEGK and NAGH. His41 functions as the Proton donor in the catalytic mechanism. 300–306 lines the substrate pocket; it reads ATTGRPR. GTP is bound by residues Arg306, 332-334, and 414-416; these read KLD and SVG.

The protein belongs to the adenylosuccinate synthetase family. In terms of assembly, homodimer. Mg(2+) is required as a cofactor.

It is found in the cytoplasm. The catalysed reaction is IMP + L-aspartate + GTP = N(6)-(1,2-dicarboxyethyl)-AMP + GDP + phosphate + 2 H(+). The protein operates within purine metabolism; AMP biosynthesis via de novo pathway; AMP from IMP: step 1/2. In terms of biological role, plays an important role in the de novo pathway of purine nucleotide biosynthesis. Catalyzes the first committed step in the biosynthesis of AMP from IMP. This is Adenylosuccinate synthetase from Desulfovibrio desulfuricans (strain ATCC 27774 / DSM 6949 / MB).